The following is a 705-amino-acid chain: Translation initiation factor IF-2 (705 aa).

The segment at 40–124 is disordered; that stretch reads DDQIKALDKK…QPAAPKEIPS (85 aa). The segment covering 41–58 has biased composition (basic and acidic residues); it reads DQIKALDKKFKKEQKNDN. A compositionally biased stretch (low complexity) spans 59-77; that stretch reads KQSTQNNHQKSNNQNQNKG. Over residues 94–108 the composition is skewed to basic residues; the sequence is KGNKKNNRNNKKNNK. Residues 207 to 376 enclose the tr-type G domain; that stretch reads ERPAVVTIMG…GLVAEVQELK (170 aa). Residues 216–223 are G1; sequence GHVDHGKT. GTP is bound at residue 216 to 223; the sequence is GHVDHGKT. Residues 241 to 245 are G2; that stretch reads GITQH. The tract at residues 262 to 265 is G3; it reads DTPG. Residues 262–266 and 316–319 contribute to the GTP site; these read DTPGH and NKID. The tract at residues 316 to 319 is G4; sequence NKID. The tract at residues 352–354 is G5; the sequence is SAL.

It belongs to the TRAFAC class translation factor GTPase superfamily. Classic translation factor GTPase family. IF-2 subfamily.

Its subcellular location is the cytoplasm. In terms of biological role, one of the essential components for the initiation of protein synthesis. Protects formylmethionyl-tRNA from spontaneous hydrolysis and promotes its binding to the 30S ribosomal subunits. Also involved in the hydrolysis of GTP during the formation of the 70S ribosomal complex. The sequence is that of Translation initiation factor IF-2 from Staphylococcus aureus (strain MRSA252).